Consider the following 152-residue polypeptide: Large-conductance mechanosensitive channel (152 aa).

Transmembrane regions (helical) follow at residues 21-41 (IDLA…DSLV), 44-64 (VVMP…NKFL), and 92-112 (GNFI…FWMV).

The protein belongs to the MscL family. As to quaternary structure, homopentamer.

It is found in the cell inner membrane. Functionally, channel that opens in response to stretch forces in the membrane lipid bilayer. May participate in the regulation of osmotic pressure changes within the cell. The sequence is that of Large-conductance mechanosensitive channel from Bordetella pertussis (strain Tohama I / ATCC BAA-589 / NCTC 13251).